A 49-amino-acid chain; its full sequence is MLLMRLAVPFCRQNAVSSYLALSPLPKGGIFSVALAVSGTAESRCLVIN.

This is an uncharacterized protein from Treponema pallidum (strain Nichols).